The following is a 130-amino-acid chain: Small ribosomal subunit protein uS8 (130 aa).

This sequence belongs to the universal ribosomal protein uS8 family. In terms of assembly, part of the 30S ribosomal subunit.

Its function is as follows. One of the primary rRNA binding proteins, it binds directly to 16S rRNA central domain where it helps coordinate assembly of the platform of the 30S subunit. The chain is Small ribosomal subunit protein uS8 from Methanotorris igneus (Methanococcus igneus).